The following is a 621-amino-acid chain: F-box/LRR-repeat protein 4 (621 aa).

R28 is modified (asymmetric dimethylarginine). Residues N277–L332 form the F-box domain. LRR repeat units lie at residues E376–S397, N402–H421, S427–N448, E452–I474, K480–A501, C504–C524, L532–C558, T559–S583, and C584–S609.

Part of a SCF (SKP1-CUL1-F-box) protein ligase complex. Interacts with VCP. Interacts with PPTC7; this interaction promotes destruction of BNIP3 and NIX and mitophagy suppression. As to expression, expressed in heart, kidney, liver, lung, pancreas, and placenta, but not in skeletal muscle.

It is found in the cytoplasm. It localises to the nucleus. The protein resides in the mitochondrion outer membrane. In terms of biological role, substrate-recognition component of the mitochondria-localized SCF-FBXL4 ubiquitin E3 ligase complex that plays a role in the restriction of mitophagy by controlling the degradation of BNIP3 and NIX mitophagy receptors. Rescues also mitochondrial injury through reverting hyperactivation of DRP1-mediated mitochondrial fission. The sequence is that of F-box/LRR-repeat protein 4 (FBXL4) from Homo sapiens (Human).